The primary structure comprises 124 residues: UPF0102 protein Mmc1_3298 (124 aa).

It belongs to the UPF0102 family.

The chain is UPF0102 protein Mmc1_3298 from Magnetococcus marinus (strain ATCC BAA-1437 / JCM 17883 / MC-1).